Here is a 246-residue protein sequence, read N- to C-terminus: MADS-box transcription factor 14 (246 aa).

The 61-residue stretch at 1 to 61 (MGRGKVQLKR…GKLYKYATDS (61 aa)) folds into the MADS-box domain. One can recognise a K-box domain in the interval 88–178 (QGNWCHEYRK…QKELVEKQKV (91 aa)). The tract at residues 180–199 (KQQVQWDQTQPQTSSSSSSF) is disordered.

In terms of tissue distribution, highly expressed in sterile lemmas, at intermediate levels in stamens, and weakly in lemmas, paleas and carpels.

It is found in the nucleus. In terms of biological role, probable transcription factor. This is MADS-box transcription factor 14 (MADS14) from Oryza sativa subsp. indica (Rice).